Here is a 79-residue protein sequence, read N- to C-terminus: Putative membrane protein insertion efficiency factor (79 aa).

It belongs to the UPF0161 family.

Its subcellular location is the cell inner membrane. Functionally, could be involved in insertion of integral membrane proteins into the membrane. This chain is Putative membrane protein insertion efficiency factor, found in Prochlorococcus marinus (strain SARG / CCMP1375 / SS120).